A 341-amino-acid chain; its full sequence is Protein P3 (341 aa).

The tract at residues R46–E175 is disordered. Residues K97 to N116 show a composition bias toward basic residues. Residues S142–S152 are compositionally biased toward low complexity.

Belongs to the nepovirus protein P3 family.

The sequence is that of Protein P3 from Vitis rupestris (Grape).